We begin with the raw amino-acid sequence, 237 residues long: Ribose-5-phosphate isomerase A (237 aa).

Residues 33–36 (TGST), 90–93 (DGAD), and 103–106 (KGGG) each bind substrate. E112 acts as the Proton acceptor in catalysis. Residue K130 participates in substrate binding.

Belongs to the ribose 5-phosphate isomerase family. Homodimer.

The catalysed reaction is aldehydo-D-ribose 5-phosphate = D-ribulose 5-phosphate. The protein operates within carbohydrate degradation; pentose phosphate pathway; D-ribose 5-phosphate from D-ribulose 5-phosphate (non-oxidative stage): step 1/1. Catalyzes the reversible conversion of ribose-5-phosphate to ribulose 5-phosphate. The sequence is that of Ribose-5-phosphate isomerase A from Gloeothece citriformis (strain PCC 7424) (Cyanothece sp. (strain PCC 7424)).